Here is a 188-residue protein sequence, read N- to C-terminus: Pyridoxal 5'-phosphate synthase subunit PdxT (188 aa).

46 to 48 (GES) contacts L-glutamine. The active-site Nucleophile is Cys-78. Residues Arg-106 and 132–133 (IR) each bind L-glutamine. Active-site charge relay system residues include His-169 and Glu-171.

This sequence belongs to the glutaminase PdxT/SNO family. In the presence of PdxS, forms a dodecamer of heterodimers. Only shows activity in the heterodimer.

The enzyme catalyses aldehydo-D-ribose 5-phosphate + D-glyceraldehyde 3-phosphate + L-glutamine = pyridoxal 5'-phosphate + L-glutamate + phosphate + 3 H2O + H(+). It carries out the reaction L-glutamine + H2O = L-glutamate + NH4(+). It functions in the pathway cofactor biosynthesis; pyridoxal 5'-phosphate biosynthesis. Its function is as follows. Catalyzes the hydrolysis of glutamine to glutamate and ammonia as part of the biosynthesis of pyridoxal 5'-phosphate. The resulting ammonia molecule is channeled to the active site of PdxS. This is Pyridoxal 5'-phosphate synthase subunit PdxT from Tropheryma whipplei (strain TW08/27) (Whipple's bacillus).